The chain runs to 177 residues: Secretion monitor (177 aa).

Positions 1–37 (MIGILNRWRQFGRRYFWPHLLLGMVAASLGVPLNLSG) are cleaved as a signal peptide.

The protein belongs to the SecM family.

Its subcellular location is the cytoplasm. It localises to the cytosol. The protein localises to the periplasm. Regulates secA expression by translational coupling of the secM secA operon. Translational pausing at a specific Pro residue 5 residues before the end of the protein may allow disruption of a mRNA repressor helix that normally suppresses secA translation initiation. The polypeptide is Secretion monitor (Yersinia pestis bv. Antiqua (strain Antiqua)).